The chain runs to 139 residues: Histone H2AX (139 aa).

A disordered region spans residues M1–S24. S136 is subject to Phosphoserine; by ATM and ATR. The [ST]-Q motif signature appears at S136 to Q137.

This sequence belongs to the histone H2A family. The nucleosome is a histone octamer containing two molecules each of H2A, H2B, H3 and H4 assembled in one H3-H4 heterotetramer and two H2A-H2B heterodimers. The octamer wraps approximately 147 bp of DNA. Interacts with numerous proteins required for DNA damage signaling and repair when phosphorylated on Ser-136. Phosphorylated on Ser-136 (to form gamma-H2AX) in response to DNA double strand breaks (DSBs) generated by exogenous genotoxic agents and by stalled replication forks, and may also occur during meiotic recombination events. Phosphorylation can extend up to several thousand nucleosomes from the actual site of the DSB and may mark the surrounding chromatin for recruitment of proteins required for DNA damage signaling and repair. Widespread phosphorylation may also serve to amplify the damage signal or aid repair of persistent lesions. Phosphorylation of Ser-136 in response to ionizing radiation is mediated by ATM while defects in DNA replication induce Ser-136 phosphorylation subsequent to activation of ATR. Dephosphorylation of Ser-136 by PP2A is required for DNA DSB repair.

It is found in the nucleus. The protein localises to the chromosome. In terms of biological role, variant histone H2A which replaces conventional H2A in a subset of nucleosomes. Nucleosomes wrap and compact DNA into chromatin, limiting DNA accessibility to the cellular machineries which require DNA as a template. Histones thereby play a central role in transcription regulation, DNA repair, DNA replication and chromosomal stability. DNA accessibility is regulated via a complex set of post-translational modifications of histones, also called histone code, and nucleosome remodeling. Required for checkpoint-mediated arrest of cell cycle progression in response to low doses of ionizing radiation and for efficient repair of DNA double strand breaks (DSBs) specifically when modified by C-terminal phosphorylation. This Cicer arietinum (Chickpea) protein is Histone H2AX (HIS2A).